The primary structure comprises 422 residues: Metallocarboxypeptidase A (422 aa).

An N-terminal signal peptide occupies residues 1–17 (MRSVLSLALLAANVVTA). A propeptide spans 18-112 (AVVSPFDYSG…FEAYSAGYAP (95 aa)) (activation peptide). Positions 119–419 (SYHSYQDHIS…AGTVAMLKAV (301 aa)) constitute a Peptidase M14 domain. Residues His-179 and Glu-182 each coordinate Zn(2+). Substrate-binding positions include 179 to 182 (HARE), Arg-237, and 254 to 255 (NR). Cysteines 248 and 271 form a disulfide. His-309 is a Zn(2+) binding site. A substrate-binding site is contributed by 310 to 311 (SY). Catalysis depends on Glu-385, which acts as the Proton donor/acceptor.

This sequence belongs to the peptidase M14 family. Zn(2+) serves as cofactor.

It localises to the secreted. Extracellular metalloprotease that contributes to pathogenicity. This is Metallocarboxypeptidase A (MCPA) from Trichophyton equinum (Horse ringworm fungus).